Reading from the N-terminus, the 66-residue chain is Nigrocin-2GRa (66 aa).

The signal sequence occupies residues 1–22; it reads MFTLKKSQLLLFFPGTINLSLC. Positions 23 to 45 are excised as a propeptide; sequence QDETNAEEERRDEEVAKMEEIKR. The cysteines at positions 60 and 66 are disulfide-linked.

In terms of tissue distribution, expressed by the skin glands.

The protein resides in the secreted. Its function is as follows. Antimicrobial peptide active at least against the Gram-positive bacterium S.aureus but with otherwise unclear activity spectrum. Lacks hemolytic activity against rabbit or human erythrocytes. This chain is Nigrocin-2GRa, found in Odorrana grahami (Yunnanfu frog).